The following is a 107-amino-acid chain: Nucleoid-associated protein MCA1327 (107 aa).

This sequence belongs to the YbaB/EbfC family. As to quaternary structure, homodimer.

The protein localises to the cytoplasm. It is found in the nucleoid. In terms of biological role, binds to DNA and alters its conformation. May be involved in regulation of gene expression, nucleoid organization and DNA protection. This chain is Nucleoid-associated protein MCA1327, found in Methylococcus capsulatus (strain ATCC 33009 / NCIMB 11132 / Bath).